The sequence spans 110 residues: Endoribonuclease SymE (110 aa).

A SpoVT-AbrB domain is found at 29–74 (SSYPEYTRIPAITLKGQWLEDAGFTTGTQVDVRVMNGCIVLTAQQP).

The protein belongs to the SymE family.

The protein localises to the cytoplasm. Involved in the degradation and recycling of damaged RNA. It is itself a target for degradation by the ATP-dependent protease Lon. The polypeptide is Endoribonuclease SymE (Salmonella choleraesuis (strain SC-B67)).